The chain runs to 671 residues: UvrABC system protein B (671 aa).

Residues 35 to 423 (KAIIENKKHQ…NHQVVQQIIR (389 aa)) form the Helicase ATP-binding domain. 48-55 (GATGTGKT) contacts ATP. The Beta-hairpin signature appears at 101–124 (NFDFFQPEAYIPSKDLYIDKDSRQ). Residues 440–602 (QIDDIINEIH…IVPKTISKAI (163 aa)) form the Helicase C-terminal domain. The UVR domain occupies 632 to 667 (QQTIDNLRQEMLQAAKELDFERAAILRDTIIELENE).

It belongs to the UvrB family. In terms of assembly, forms a heterotetramer with UvrA during the search for lesions. Interacts with UvrC in an incision complex.

The protein resides in the cytoplasm. In terms of biological role, the UvrABC repair system catalyzes the recognition and processing of DNA lesions. A damage recognition complex composed of 2 UvrA and 2 UvrB subunits scans DNA for abnormalities. Upon binding of the UvrA(2)B(2) complex to a putative damaged site, the DNA wraps around one UvrB monomer. DNA wrap is dependent on ATP binding by UvrB and probably causes local melting of the DNA helix, facilitating insertion of UvrB beta-hairpin between the DNA strands. Then UvrB probes one DNA strand for the presence of a lesion. If a lesion is found the UvrA subunits dissociate and the UvrB-DNA preincision complex is formed. This complex is subsequently bound by UvrC and the second UvrB is released. If no lesion is found, the DNA wraps around the other UvrB subunit that will check the other stand for damage. The protein is UvrABC system protein B of Mycoplasma mycoides subsp. mycoides SC (strain CCUG 32753 / NCTC 10114 / PG1).